Here is a 350-residue protein sequence, read N- to C-terminus: Hydroxymethylglutaryl-CoA synthase (350 aa).

Asp-30 provides a ligand contact to (3S)-3-hydroxy-3-methylglutaryl-CoA. The Proton donor/acceptor role is filled by Glu-82. Cys-114, Ser-155, Thr-203, and His-236 together coordinate (3S)-3-hydroxy-3-methylglutaryl-CoA. Cys-114 serves as the catalytic Acyl-thioester intermediate. His-236 (proton donor/acceptor) is an active-site residue. Arg-241 provides a ligand contact to CoA. The (3S)-3-hydroxy-3-methylglutaryl-CoA site is built by Arg-245, Asn-268, and Ser-298.

It belongs to the thiolase-like superfamily. Archaeal HMG-CoA synthase family. As to quaternary structure, interacts with acetoacetyl-CoA thiolase that catalyzes the precedent step in the pathway and with a DUF35 protein. The acetoacetyl-CoA thiolase/HMG-CoA synthase complex channels the intermediate via a fused CoA-binding site, which allows for efficient coupling of the endergonic thiolase reaction with the exergonic HMGCS reaction.

The catalysed reaction is acetoacetyl-CoA + acetyl-CoA + H2O = (3S)-3-hydroxy-3-methylglutaryl-CoA + CoA + H(+). Its pathway is metabolic intermediate biosynthesis; (R)-mevalonate biosynthesis; (R)-mevalonate from acetyl-CoA: step 2/3. Catalyzes the condensation of acetyl-CoA with acetoacetyl-CoA to form 3-hydroxy-3-methylglutaryl-CoA (HMG-CoA). Functions in the mevalonate (MVA) pathway leading to isopentenyl diphosphate (IPP), a key precursor for the biosynthesis of isoprenoid compounds that are building blocks of archaeal membrane lipids. This Pyrobaculum calidifontis (strain DSM 21063 / JCM 11548 / VA1) protein is Hydroxymethylglutaryl-CoA synthase.